The sequence spans 143 residues: Large ribosomal subunit protein uL11 (143 aa).

This sequence belongs to the universal ribosomal protein uL11 family. In terms of assembly, part of the ribosomal stalk of the 50S ribosomal subunit. Interacts with L10 and the large rRNA to form the base of the stalk. L10 forms an elongated spine to which L12 dimers bind in a sequential fashion forming a multimeric L10(L12)X complex. In terms of processing, one or more lysine residues are methylated.

Its function is as follows. Forms part of the ribosomal stalk which helps the ribosome interact with GTP-bound translation factors. This Saccharophagus degradans (strain 2-40 / ATCC 43961 / DSM 17024) protein is Large ribosomal subunit protein uL11.